Here is a 573-residue protein sequence, read N- to C-terminus: Poly(ribitol-phosphate) beta-N-acetylglucosaminyltransferase TarS (573 aa).

UDP-N-acetyl-alpha-D-glucosamine is bound by residues Pro9, Asp41, Asn68, Arg76, 92–94 (DSD), Arg127, and Glu178. Asp94 contacts Mn(2+). Asp179 serves as the catalytic Proton acceptor. UDP-N-acetyl-alpha-D-glucosamine-binding positions include Arg207 and 211-213 (HMS).

This sequence belongs to the glycosyltransferase 2 family. Homotrimer. The cofactor is Mn(2+).

It carries out the reaction 4-O-[(D-ribitylphospho)(n)-di{(2R)-glycerylphospho}]-N-acetyl-beta-D-mannosaminyl-(1-&gt;4)-N-acetyl-alpha-D-glucosaminyl di-trans,octa-cis-undecaprenyl diphosphate + n UDP-N-acetyl-alpha-D-glucosamine = 4-O-([2-N-acetyl-beta-D-glucosaminyl-1-D-ribitylphospho](n)-di{[2R]-1-glycerylphospho})-N-acetyl-beta-D-mannosaminyl-(1-&gt;4)-N-acetyl-alpha-D-glucosaminyl di-trans,octa-cis-undecaprenyl diphosphate + n UDP + n H(+). The protein operates within cell wall biogenesis; poly(ribitol phosphate) teichoic acid biosynthesis. Its function is as follows. Attaches beta-O-GlcNAc (beta-O-N-acetyl-D-glucosamine) residues to the C4 position of poly(RboP)-wall teichoic acids (WTAs). Mediates beta-lactam resistance in methicillin resistant Staphylococcus aureus (MRSA) strains. The protein is Poly(ribitol-phosphate) beta-N-acetylglucosaminyltransferase TarS of Staphylococcus aureus (strain Mu50 / ATCC 700699).